The primary structure comprises 198 residues: Probable GTP-binding protein EngB (198 aa).

The EngB-type G domain occupies 36–198 (SDPQFAFIGR…NLSKLQELLE (163 aa)). Residues 44 to 51 (GRSNVGKS), 70 to 74 (GRTQL), 88 to 91 (DLPG), 155 to 158 (NKID), and 182 to 184 (ISA) contribute to the GTP site. Positions 51 and 72 each coordinate Mg(2+).

It belongs to the TRAFAC class TrmE-Era-EngA-EngB-Septin-like GTPase superfamily. EngB GTPase family. Mg(2+) is required as a cofactor.

Necessary for normal cell division and for the maintenance of normal septation. The chain is Probable GTP-binding protein EngB from Mesomycoplasma hyopneumoniae (strain 7448) (Mycoplasma hyopneumoniae).